A 163-amino-acid chain; its full sequence is Nucleotide-binding protein KPK_4305 (163 aa).

It belongs to the YajQ family.

Functionally, nucleotide-binding protein. The sequence is that of Nucleotide-binding protein KPK_4305 from Klebsiella pneumoniae (strain 342).